The sequence spans 109 residues: Membrane-bound lysozyme inhibitor of C-type lysozyme (109 aa).

The signal sequence occupies residues 1–17 (MTMKKLLIIILPVLLSG). Cys18 is lipidated: N-palmitoyl cysteine. The S-diacylglycerol cysteine moiety is linked to residue Cys18. Residues Cys37 and Cys102 are joined by a disulfide bond.

It belongs to the MliC family. Type 1 subfamily. In terms of assembly, monomer.

Its subcellular location is the cell outer membrane. Specifically inhibits C-type lysozymes. The protein is Membrane-bound lysozyme inhibitor of C-type lysozyme of Escherichia coli (strain K12).